Consider the following 201-residue polypeptide: Large ribosomal subunit protein bL25 (201 aa).

A disordered region spans residues 181 to 201 (APRESEEEAEEEATETAKESE). Residues 185-194 (SEEEAEEEAT) are compositionally biased toward acidic residues.

The protein belongs to the bacterial ribosomal protein bL25 family. CTC subfamily. In terms of assembly, part of the 50S ribosomal subunit; part of the 5S rRNA/L5/L18/L25 subcomplex. Contacts the 5S rRNA. Binds to the 5S rRNA independently of L5 and L18.

This is one of the proteins that binds to the 5S RNA in the ribosome where it forms part of the central protuberance. The protein is Large ribosomal subunit protein bL25 of Thermoanaerobacter pseudethanolicus (strain ATCC 33223 / 39E) (Clostridium thermohydrosulfuricum).